The chain runs to 94 residues: RxLR effector protein PITG_15972 (94 aa).

The signal sequence occupies residues 1–21 (MRAVYILAMACAATLQASSSA). A RxLR-dEER motif is present at residues 50 to 65 (RLLRVEDKEEETEEER).

Belongs to the RxLR effector family.

It is found in the secreted. The protein resides in the host cytoplasm. The protein localises to the host nucleus. Effector that enhances P.infestans colonization of Nicotiana benthamiana leaves. The protein is RxLR effector protein PITG_15972 of Phytophthora infestans (strain T30-4) (Potato late blight agent).